Here is a 424-residue protein sequence, read N- to C-terminus: Inhibin beta A chain (424 aa).

Residues 1-20 (MPLLWLRGFLLASCWIIVRS) form the signal peptide. Residues 21–308 (SPTPGSEGPG…EDHPHRRRRR (288 aa)) constitute a propeptide that is removed on maturation. Asn-165 carries an N-linked (GlcNAc...) asparagine glycan. The tract at residues 257-288 (KKKKKEEEGEGKKKDGGDGGAGADEDKEQSHR) is disordered. Residues 261 to 273 (KEEEGEGKKKDGG) show a composition bias toward basic and acidic residues. 4 disulfide bridges follow: Cys-312-Cys-320, Cys-319-Cys-389, Cys-348-Cys-421, and Cys-352-Cys-423.

It belongs to the TGF-beta family. As to quaternary structure, dimeric, linked by one or more disulfide bonds. Inhibin A is a dimer of alpha/INHA and beta-A/INHBA. Activin A is a homodimer of beta-A/INHBA. Activin AB is a dimer of beta-A/INHBA and beta-B/INHBB. Interacts with FST and FSTL3; these interactions prevent activin A interaction to its type II receptor. Activin A interacts with ACVR2A. Activin A interacts with BMPR2. Inhibin A interacts with ACVR1; this interaction creates a non-signaling complex (NSC) that inhibits ACVR1-mediated BMP signaling. Inhibin A interacts with ACVR2A.

The protein resides in the secreted. In terms of biological role, inhibins/activins are involved in regulating a number of diverse functions such as hypothalamic and pituitary hormone secretion, gonadal hormone secretion, germ cell development and maturation, erythroid differentiation, insulin secretion, nerve cell survival, embryonic axial development or bone growth, depending on their subunit composition. Activin A is a homodimer of INHBA that plays a role in several essential biological processes including embryonic development, stem cell maintenance and differentiation, haematopoiesis, cell proliferation and tissue fibrosis. Signals through type I (such as ACVR1B or ACVR1C) and type II receptors (such as ACVR2A, ACVR2B or BMPR2) which, upon ligand binding, phosphorylate SMAD2 and SMAD3 intracellular signaling mediators that form a complex with SMAD4, translocate to the nucleus and modulate gene expression. Can also activate alternative non-canonical intracellular signaling pathways including the p38 MAPK, extracellular signal-regulated kinases 1/2 (ERK1/2) and c-Jun N-terminal kinases (JNKs) to modulate cell migration and differentiation. Alternatively, promotes osteoblastic differentiation via ACVRL1-SMAD1/5/9 pathway. In addition, can engage the type I receptor ACVR1 to form an ACVR1-activin A-type II receptor non-signaling complex (NSC) that renders receptors unavailable for engagement with BMPs, hence resulting in an apparent inhibition of ACVR1-mediated BMP signaling. Functionally, inhibin A is a dimer of alpha/INHA and beta-A/INHBA that functions as a feedback regulator in the hypothalamic-pituitary-gonadal (HPG) axis. Inhibits the secretion of FSH from the anterior pituitary gland by acting on pituitary gonadotrope cells. Antagonizes activin A by binding to the proteoglycan, betaglycan, and forming a stable complex with and, thereby, sequestering type II activin receptors while excluding type I receptor. The protein is Inhibin beta A chain (INHBA) of Felis catus (Cat).